The sequence spans 316 residues: Retinol dehydrogenase 12 (316 aa).

46–52 (GANTGIG) is a binding site for NADP(+). Residue Ser-175 coordinates substrate. Tyr-200 functions as the Proton acceptor in the catalytic mechanism.

The protein belongs to the short-chain dehydrogenases/reductases (SDR) family. As to expression, widely expressed, mostly in retina, kidney, brain, skeletal muscle, pancreas and stomach.

The protein localises to the endoplasmic reticulum membrane. The catalysed reaction is all-trans-retinol + NADP(+) = all-trans-retinal + NADPH + H(+). It catalyses the reaction 11-cis-retinol + NADP(+) = 11-cis-retinal + NADPH + H(+). It carries out the reaction 9-cis-retinol + NADP(+) = 9-cis-retinal + NADPH + H(+). The enzyme catalyses a 4-hydroxynonen-1-ol + NADP(+) = a 4-hydroxynonenal + NADPH + H(+). The catalysed reaction is (E)-non-2-en-1-ol + NADP(+) = (E)-non-2-enal + NADPH + H(+). It catalyses the reaction (Z)-non-6-en-1-ol + NADP(+) = (Z)-non-6-enal + NADPH + H(+). It carries out the reaction nonan-1-ol + NADP(+) = nonanal + NADPH + H(+). Its pathway is cofactor metabolism; retinol metabolism. In terms of biological role, retinoids dehydrogenase/reductase with a clear preference for NADP. Displays high activity towards 9-cis, 11-cis and all-trans-retinal. Shows very weak activity towards 13-cis-retinol. Also exhibits activity, albeit with lower affinity than for retinaldehydes, towards lipid peroxidation products (C9 aldehydes) such as 4-hydroxynonenal and trans-2-nonenal. May play an important function in photoreceptor cells to detoxify 4-hydroxynonenal and potentially other toxic aldehyde products resulting from lipid peroxidation. Has no dehydrogenase activity towards steroids. In Homo sapiens (Human), this protein is Retinol dehydrogenase 12 (RDH12).